Reading from the N-terminus, the 161-residue chain is Heme transporter hrg-6 (161 aa).

The next 4 helical transmembrane spans lie at 13-33 (IAYTICGIIIGLFWACVYIFA), 38-58 (VALAACLTATAFAFETFYFYL), 75-95 (VLFWINLIVGFLSIGGMITAI), and 115-135 (WWSTATWFLVMLKWTWQNAFI).

The protein belongs to the HRG family.

Its subcellular location is the membrane. Its function is as follows. Heme transporter. This Caenorhabditis elegans protein is Heme transporter hrg-6 (hrg-6).